The primary structure comprises 249 residues: Pyridoxamine 5'-phosphate oxidase family protein ustO (249 aa).

21–24 lines the substrate pocket; that stretch reads LFFV. Residues 76–81, 91–92, Arg-105, and 163–164 each bind FMN; these read ATVMFC and RL. Substrate is bound at residue 215–217; that stretch reads ASY. The helical transmembrane segment at 227–247 threads the bilayer; sequence TGMALMFLVMVVAQWVGYVLY.

This sequence belongs to the pyridoxamine 5'-phosphate oxidase family. It depends on FMN as a cofactor.

It is found in the membrane. It functions in the pathway mycotoxin biosynthesis. Its function is as follows. Pyridoxamine 5'-phosphate oxidase family protein; part of the gene cluster that mediates the biosynthesis of the secondary metabolite ustiloxin B, an antimitotic tetrapeptide. First, ustA is processed by the subtilisin-like endoprotease Kex2 that is outside the ustiloxin B gene cluster, at the C-terminal side of Arg-Lys, after transfer to Golgi apparatus through the endoplasmic reticulum (ER). Cleavage by KEX2 generates 16 peptides YAIG-I to YAIG-XVI. To process the precursor peptide further, at least two peptidases are necessary to cleave the N-terminal and C-terminal sides of the Tyr-Ala-Ile-Gly core peptide which serves as backbone for the synthesis of ustiloxin B, through cyclization and modification of the tyrosine with a non-protein coding amino acid, norvaline. One of the two peptidases must be the serine peptidase ustP; and the other pepdidase is probably ustH. Macrocyclization of the core peptide derived from ustA requires the tyrosinase ustQ, as well as the homologous oxidases ustYa and ustYb, and leads to the production of the first cyclization product N-desmethylustiloxin F. For the formation of N-desmethylustiloxin F, three oxidation steps are required, hydroxylation at the benzylic position, hydroxylation at either the aromatic ring of Tyr or beta-position of Ile, and oxidative cyclization. UstQ may catalyze the oxidation of a phenol moiety, whereas the ustYa and ustYb are most likely responsible for the remaining two-step oxidations. N-desmethylustiloxin F is then methylated by ustM to yield ustiloxin F which in turn substrate of the cytochrome P450 monooxygenase ustC which catalyzes the formation of S-deoxyustiloxin H. The flavoprotein monooxygenases ustF1 and ustF2 then participate in the modification of the side chain of S-deoxyustiloxin H, leading to the synthesis of an oxime intermediate, via ustiloxin H. Finally, carboxylative dehydration performed by the cysteine desulfurase-like protein ustD yields ustiloxin B. This chain is Pyridoxamine 5'-phosphate oxidase family protein ustO, found in Aspergillus flavus (strain ATCC 200026 / FGSC A1120 / IAM 13836 / NRRL 3357 / JCM 12722 / SRRC 167).